The sequence spans 308 residues: N-acetylmuramic acid 6-phosphate etherase (308 aa).

The 164-residue stretch at 62-225 (TAARLRQGGR…STGVMVQLGK (164 aa)) folds into the SIS domain. The active-site Proton donor is the glutamate 90. The active site involves glutamate 121.

This sequence belongs to the GCKR-like family. MurNAc-6-P etherase subfamily. In terms of assembly, homodimer.

The catalysed reaction is N-acetyl-D-muramate 6-phosphate + H2O = N-acetyl-D-glucosamine 6-phosphate + (R)-lactate. Its pathway is amino-sugar metabolism; N-acetylmuramate degradation. Specifically catalyzes the cleavage of the D-lactyl ether substituent of MurNAc 6-phosphate, producing GlcNAc 6-phosphate and D-lactate. In Thermosynechococcus vestitus (strain NIES-2133 / IAM M-273 / BP-1), this protein is N-acetylmuramic acid 6-phosphate etherase.